Consider the following 238-residue polypeptide: Ribosomal RNA small subunit methyltransferase G (238 aa).

Residues glycine 77, phenylalanine 82, 128-129 (AE), and arginine 147 each bind S-adenosyl-L-methionine. The tract at residues 219 to 238 (KKTPARYPRKPGTPNKQPIQ) is disordered.

Belongs to the methyltransferase superfamily. RNA methyltransferase RsmG family.

It is found in the cytoplasm. In terms of biological role, specifically methylates the N7 position of guanine in position 535 of 16S rRNA. The polypeptide is Ribosomal RNA small subunit methyltransferase G (Geobacillus thermodenitrificans (strain NG80-2)).